A 209-amino-acid polypeptide reads, in one-letter code: Transcription factor atf31 (209 aa).

The segment covering 90–103 has biased composition (polar residues); it reads SKSPSIISEASHNS. The segment at 90-133 is disordered; it reads SKSPSIISEASHNSPSRELDDSGDENTSKLTGTKQSMLKARNRQ. Residues 121–184 form the bZIP domain; that stretch reads GTKQSMLKAR…IKLRTLVFAH (64 aa). The tract at residues 123–161 is basic motif; the sequence is KQSMLKARNRQAAQKCRIKKKKYLQTLQDQVNYYTSENK. The segment at 163 to 177 is leucine-zipper; that stretch reads LLQSANDLREEIIKL.

This sequence belongs to the bZIP family.

The protein resides in the nucleus. The sequence is that of Transcription factor atf31 (atf31) from Schizosaccharomyces pombe (strain 972 / ATCC 24843) (Fission yeast).